The following is a 22-amino-acid chain: Mu-conotoxin SxIIIA (22 aa).

3 cysteine pairs are disulfide-bonded: C2-C15, C3-C20, and C10-C21. At A22 the chain carries Alanine amide.

This sequence belongs to the conotoxin M superfamily. In terms of tissue distribution, expressed by the venom duct.

Its subcellular location is the secreted. Functionally, mu-conotoxins block voltage-gated sodium channels (Nav). This synthetic toxin potently blocks rNav1.4/SCN4A (IC(50)= 7 nM). It also moderately blocks rNav1.1/SCN1A (IC(50)=370 nM), rNav1.2/SCN2A (IC(50)=1 uM), and mNav1.6/SCN6A (IC(50)=570 nM). It is noteworthy that coexpression of subunits beta-2 or beta-4 (but not beta-1 or beta-3) decrease by more that 10-fold the binding potency of the toxin to rNav1.6. It is also noteworthy that the toxin is 50-fold more potent on mouse Nav1.6 than on rat Nav1.6. In vivo, when injected intraperitoneally or subcutaneously in mice, causes motor impairment, paralysis and death. This is Mu-conotoxin SxIIIA from Conus striolatus (Cone snail).